The primary structure comprises 247 residues: Golgi-associated RAB2 interactor protein 5A (247 aa).

Positions 1 to 16 (MGPPLWPDLQEPPPPG) are enriched in pro residues. 2 disordered regions span residues 1-22 (MGPP…SQIR) and 60-92 (GDIA…PTGR).

This sequence belongs to the GARIN family. Interacts (via N-terminus) with RAB2B (in GTP-bound form).

Its subcellular location is the golgi apparatus. In terms of biological role, RAB2B effector protein which promotes cytosolic DNA-induced innate immune responses. Regulates IFN responses against DNA viruses by regulating the CGAS-STING signaling axis. The polypeptide is Golgi-associated RAB2 interactor protein 5A (Homo sapiens (Human)).